Here is a 175-residue protein sequence, read N- to C-terminus: Translation initiation factor IF-3 (175 aa).

Belongs to the IF-3 family. In terms of assembly, monomer.

Its subcellular location is the cytoplasm. In terms of biological role, IF-3 binds to the 30S ribosomal subunit and shifts the equilibrium between 70S ribosomes and their 50S and 30S subunits in favor of the free subunits, thus enhancing the availability of 30S subunits on which protein synthesis initiation begins. This chain is Translation initiation factor IF-3, found in Aquifex aeolicus (strain VF5).